The following is a 119-amino-acid chain: Large ribosomal subunit protein bL20 (119 aa).

Belongs to the bacterial ribosomal protein bL20 family.

Functionally, binds directly to 23S ribosomal RNA and is necessary for the in vitro assembly process of the 50S ribosomal subunit. It is not involved in the protein synthesizing functions of that subunit. The protein is Large ribosomal subunit protein bL20 of Bacillus licheniformis (strain ATCC 14580 / DSM 13 / JCM 2505 / CCUG 7422 / NBRC 12200 / NCIMB 9375 / NCTC 10341 / NRRL NRS-1264 / Gibson 46).